We begin with the raw amino-acid sequence, 107 residues long: Guanylate cyclase activator 2B (107 aa).

The signal sequence occupies residues 1–21; sequence MSGSQLWAAVVVLLLLQSAQG. Residues 22-92 constitute a propeptide that is removed on maturation; the sequence is VYIKYHGFQV…STFKALRTIA (71 aa). Cystine bridges form between C63-C76, C96-C104, and C99-C107.

This sequence belongs to the guanylin family.

The protein resides in the secreted. Its function is as follows. Endogenous activator of intestinal guanylate cyclase. It stimulates this enzyme through the same receptor binding region as the heat-stable enterotoxins. May be a potent physiological regulator of intestinal fluid and electrolyte transport. May be an autocrine/paracrine regulator of intestinal salt and water transport. This chain is Guanylate cyclase activator 2B (GUCA2B), found in Notomys alexis (Spinifex hopping mouse).